Reading from the N-terminus, the 321-residue chain is Hydropyrene synthase (321 aa).

Positions 82, 225, 229, and 233 each coordinate Mg(2+). A DDxx(x)D/E motif motif is present at residues 82-87 (DDRAID). Residues 225–233 (NDLHSFARE) carry the NDxxSxxxD/E motif motif.

Belongs to the terpene synthase family. Mg(2+) serves as cofactor.

The enzyme catalyses (2E,6E,10E)-geranylgeranyl diphosphate = hydropyrene + diphosphate. It carries out the reaction (2E,6E,10E)-geranylgeranyl diphosphate + H2O = hydropyrenol + diphosphate. The catalysed reaction is (2E,6E,10E)-geranylgeranyl diphosphate = isoelisabethatriene + diphosphate. It functions in the pathway secondary metabolite biosynthesis; terpenoid biosynthesis. In terms of biological role, terpene synthase that catalyzes the conversion of geranylgeranyl diphosphate (GGPP) into a mixture of diterpenes, including hydropyrene (HP), hydropyrenol (HPol), isoelisabethatriene and traces of isoelisabethatriene B. Hydropyrene is the main product. Some other diterpenoids are also produced in very low quantities. The chain is Hydropyrene synthase from Streptomyces clavuligerus.